The primary structure comprises 180 residues: uncharacterized protein (180 aa).

The Nudix hydrolase domain maps to 35–163; it reads LRHRATYIVV…TPDSLKALAL (129 aa). The Nudix box motif lies at 72–94; it reads GGVVQADEQLLESARREAEEELG. Mg(2+) is bound by residues Glu88 and Glu92.

It belongs to the Nudix hydrolase family. Requires Mg(2+) as cofactor.

This is an uncharacterized protein from Shigella flexneri.